The following is a 93-amino-acid chain: Protamine-3 (93 aa).

A disordered region spans residues 1–93 (MGSRCAKLGT…QSPEPKQTRS (93 aa)). The segment covering 37–57 (EGEEEEEGEEEEEEEGEEEEL) has biased composition (acidic residues). Over residues 81-93 (EVQQSPEPKQTRS) the composition is skewed to polar residues. S85 carries the phosphoserine modification.

This sequence belongs to the protamine P3 family.

The protein resides in the nucleus. It is found in the chromosome. Functionally, protamines substitute for histones in the chromatin of sperm during the haploid phase of spermatogenesis. They compact sperm DNA into a highly condensed, stable and inactive complex. This Bos taurus (Bovine) protein is Protamine-3 (PRM3).